We begin with the raw amino-acid sequence, 697 residues long: Elongation factor G 2 (697 aa).

The 276-residue stretch at Ser5–Asp280 folds into the tr-type G domain. GTP contacts are provided by residues Ala14–Thr21, Asp78–His82, and Asn132–Asp135.

It belongs to the TRAFAC class translation factor GTPase superfamily. Classic translation factor GTPase family. EF-G/EF-2 subfamily.

The protein resides in the cytoplasm. Catalyzes the GTP-dependent ribosomal translocation step during translation elongation. During this step, the ribosome changes from the pre-translocational (PRE) to the post-translocational (POST) state as the newly formed A-site-bound peptidyl-tRNA and P-site-bound deacylated tRNA move to the P and E sites, respectively. Catalyzes the coordinated movement of the two tRNA molecules, the mRNA and conformational changes in the ribosome. This is Elongation factor G 2 from Shewanella sp. (strain MR-7).